We begin with the raw amino-acid sequence, 120 residues long: uncharacterized protein (120 aa).

Helical transmembrane passes span 24 to 44 (ALLG…ALCY), 61 to 81 (IGVV…NLAV), and 86 to 106 (PLGK…GIVV).

The protein to M.leprae ML1176.

The protein localises to the cell membrane. This is an uncharacterized protein from Mycobacterium bovis (strain ATCC BAA-935 / AF2122/97).